The following is a 173-amino-acid chain: MNSKRIALGIIALATVVSLGTAANNAFARGHGNYHGQGQMMGQAYEALTPEKQAKFDSLIDAFNTKVTPLRDKLWAKHTELNALSSNPNTKPEDIRKLTDEITALRTQYRTEAANLDASMQKEVGIKTHFATMGHRGMGGMGGGCGMMGGKGGMGSGMMQMHDGEGPHRGQNM.

The signal sequence occupies residues 1 to 28 (MNSKRIALGIIALATVVSLGTAANNAFA).

This sequence belongs to the ZraP family.

The sequence is that of Zinc resistance-associated protein homolog from Nitratidesulfovibrio vulgaris (strain ATCC 29579 / DSM 644 / CCUG 34227 / NCIMB 8303 / VKM B-1760 / Hildenborough) (Desulfovibrio vulgaris).